The sequence spans 113 residues: U10-theraphotoxin-Hs2a (113 aa).

The N-terminal stretch at 1-21 (MNTVRVTFLLVFVLAVSLGQA) is a signal peptide. Residues 22–67 (DEDGNRMEKRQKKTEAENLLLPKLEELDAKLWEEDSVESRNSRQKR) constitute a propeptide that is removed on maturation. 3 disulfides stabilise this stretch: Cys68–Cys86, Cys75–Cys91, and Cys85–Cys106.

Belongs to the neurotoxin 14 (magi-1) family. 02 (HWTX-XVIc) subfamily. In terms of tissue distribution, expressed by the venom gland.

Its subcellular location is the secreted. Probable ion channel inhibitor. This is U10-theraphotoxin-Hs2a from Cyriopagopus schmidti (Chinese bird spider).